A 937-amino-acid polypeptide reads, in one-letter code: Isoleucine--tRNA ligase (937 aa).

Residues 58–68 carry the 'HIGH' region motif; sequence PYANGSIHIGH. Glu-561 contacts L-isoleucyl-5'-AMP. Positions 602-606 match the 'KMSKS' region motif; that stretch reads KMSKS. Lys-605 is an ATP binding site. Positions 900, 903, 920, and 923 each coordinate Zn(2+).

It belongs to the class-I aminoacyl-tRNA synthetase family. IleS type 1 subfamily. Monomer. Requires Zn(2+) as cofactor.

The protein resides in the cytoplasm. The enzyme catalyses tRNA(Ile) + L-isoleucine + ATP = L-isoleucyl-tRNA(Ile) + AMP + diphosphate. Catalyzes the attachment of isoleucine to tRNA(Ile). As IleRS can inadvertently accommodate and process structurally similar amino acids such as valine, to avoid such errors it has two additional distinct tRNA(Ile)-dependent editing activities. One activity is designated as 'pretransfer' editing and involves the hydrolysis of activated Val-AMP. The other activity is designated 'posttransfer' editing and involves deacylation of mischarged Val-tRNA(Ile). The polypeptide is Isoleucine--tRNA ligase (Pectobacterium carotovorum subsp. carotovorum (strain PC1)).